We begin with the raw amino-acid sequence, 485 residues long: Solute carrier family 35 member F4 (485 aa).

2 stretches are compositionally biased toward polar residues: residues 32–42 and 50–64; these read SQKSTTRSSVT and CPSS…LSPL. 2 disordered regions span residues 32 to 64 and 78 to 111; these read SQKS…LSPL and QSRG…SSQE. Basic and acidic residues predominate over residues 88 to 98; sequence RRVERQSRSGD. The span at 99 to 111 shows a compositional bias: polar residues; that stretch reads DGTQTRPESSSQE. Helical transmembrane passes span 129–149, 156–176, 217–234, 241–261, 265–285, 294–314, 329–349, 359–381, 383–405, and 414–434; these read IWGL…TQIV, FYCP…FFPV, APFS…LLAL, DVSA…WIVL, FMGV…MMAY, IIGV…KVLF, FVST…IILY, FAAL…NILV, VGVV…PGNA, and VIFN…FLLM. One can recognise an EamA domain in the interval 225-285; the sequence is LTNYLYLLAL…AITGIVMMAY (61 aa).

It belongs to the SLC35F solute transporter family.

Its subcellular location is the membrane. In terms of biological role, putative solute transporter. This chain is Solute carrier family 35 member F4 (Slc35f4), found in Mus musculus (Mouse).